The sequence spans 266 residues: Tryptophan synthase alpha chain (266 aa).

Active-site proton acceptor residues include E49 and D60.

The protein belongs to the TrpA family. In terms of assembly, tetramer of two alpha and two beta chains.

It catalyses the reaction (1S,2R)-1-C-(indol-3-yl)glycerol 3-phosphate + L-serine = D-glyceraldehyde 3-phosphate + L-tryptophan + H2O. The protein operates within amino-acid biosynthesis; L-tryptophan biosynthesis; L-tryptophan from chorismate: step 5/5. Its function is as follows. The alpha subunit is responsible for the aldol cleavage of indoleglycerol phosphate to indole and glyceraldehyde 3-phosphate. The chain is Tryptophan synthase alpha chain from Chloroflexus aurantiacus (strain ATCC 29364 / DSM 637 / Y-400-fl).